Consider the following 462-residue polypeptide: FAD-dependent monooxygenase opaC (462 aa).

N-linked (GlcNAc...) asparagine glycosylation occurs at asparagine 10. Residues isoleucine 14 to leucine 34 traverse the membrane as a helical segment. Aspartate 43 is an FAD binding site. Residue asparagine 60 is glycosylated (N-linked (GlcNAc...) asparagine). Position 115 (arginine 115) interacts with FAD. Arginine 193 is a catalytic residue. 2 residues coordinate FAD: aspartate 322 and alanine 335.

Belongs to the paxM FAD-dependent monooxygenase family. FAD serves as cofactor.

It localises to the membrane. The protein operates within secondary metabolite biosynthesis. Functionally, FAD-dependent monooxygenase; part of the gene cluster that mediates the biosynthesis of oxepinamides, derivatives of anthranilyl-containing tripeptides that share an oxepin ring and a fused pyrimidinone moiety. The nonribosomal peptide synthetase (NRPS) opaA assembles the quinazolinone core with D-Phe incorporation. The first adenylation domain (A1) of opaA loads and activates anthranilic acid whereas the second A domain (A2) is for activating of L-Phe, which is then converted to D-form by the E domain. The third A domain (A3) is responsible for L-Ile activation and the terminal condensation domain C3 for cyclization and releasing the NRPS product protuboxepin K. The cytochrome P450 monooxygenase opaB then catalyzes alone the oxepin ring formation to convert protuboxepin K into protuboxepin A. The flavoenzyme opaC installs subsequently one hydroxyl group at the oxepin ring, accompanied by double bond migration, to form 15-epi-oxepinamide E. The epimerase opaE changes the D-Phe residue back to L-form, leading to oxepinamide E, which is further methylated at the hydroxyl group at C-12 by the O-methyltransferase OpaF to yield oxepinamide F. The sequence is that of FAD-dependent monooxygenase opaC from Aspergillus ustus.